The following is a 70-amino-acid chain: Large ribosomal subunit protein bL31 (70 aa).

Cysteine 16, cysteine 18, cysteine 37, and cysteine 40 together coordinate Zn(2+).

Belongs to the bacterial ribosomal protein bL31 family. Type A subfamily. As to quaternary structure, part of the 50S ribosomal subunit. Zn(2+) serves as cofactor.

In terms of biological role, binds the 23S rRNA. The protein is Large ribosomal subunit protein bL31 of Histophilus somni (strain 2336) (Haemophilus somnus).